A 398-amino-acid chain; its full sequence is Histidinol dehydrogenase (398 aa).

NAD(+)-binding residues include Tyr-114, Gln-176, and Asn-199. Residues Thr-222, Gln-244, and His-247 each contribute to the substrate site. Gln-244 and His-247 together coordinate Zn(2+). Residues Glu-298 and His-299 each act as proton acceptor in the active site. Substrate is bound by residues His-299, Asp-331, Glu-384, and His-389. Asp-331 contributes to the Zn(2+) binding site. His-389 is a binding site for Zn(2+).

It belongs to the histidinol dehydrogenase family. Zn(2+) is required as a cofactor.

It carries out the reaction L-histidinol + 2 NAD(+) + H2O = L-histidine + 2 NADH + 3 H(+). It participates in amino-acid biosynthesis; L-histidine biosynthesis; L-histidine from 5-phospho-alpha-D-ribose 1-diphosphate: step 9/9. Its function is as follows. Catalyzes the sequential NAD-dependent oxidations of L-histidinol to L-histidinaldehyde and then to L-histidine. This chain is Histidinol dehydrogenase (hisD), found in Saccharolobus solfataricus (strain ATCC 35092 / DSM 1617 / JCM 11322 / P2) (Sulfolobus solfataricus).